Reading from the N-terminus, the 339-residue chain is uncharacterized protein (339 aa).

The Zn(2+) site is built by histidine 17, histidine 19, histidine 197, and aspartate 278. Aspartate 279 lines the substrate pocket.

The protein belongs to the metallo-dependent hydrolases superfamily. Adenosine and AMP deaminases family. Adenine deaminase type 2 subfamily. Requires Zn(2+) as cofactor.

It localises to the cytoplasm. The protein localises to the nucleus. This is an uncharacterized protein from Schizosaccharomyces pombe (strain 972 / ATCC 24843) (Fission yeast).